We begin with the raw amino-acid sequence, 335 residues long: Partner of xrn-2 protein 1 (335 aa).

An XRN2-binding (XTBD) domain is found at 7 to 91 (VEAEKKLWES…SYVKASAAKK (85 aa)). The disordered stretch occupies residues 95-119 (VKTSDLEGASDESKKVKMEKSPSPV). Positions 105 to 114 (DESKKVKMEK) are enriched in basic and acidic residues.

In terms of assembly, interacts (via N-terminus) with xrn-2; the interaction is direct.

The protein resides in the nucleus. The protein localises to the nucleolus. It is found in the nucleoplasm. Functionally, plays a role in maintenance of steady-state concentration and turnover of microRNAs (miRNA) by degradation of mature miRNA in complex with the exoribonuclease xrn-2. Stabilizes and enhances the accumulation and activity of the exoribonuclease xrn-2, and thus contributes to miRNA turnover. In Caenorhabditis elegans, this protein is Partner of xrn-2 protein 1.